A 416-amino-acid polypeptide reads, in one-letter code: 1-deoxy-D-xylulose 5-phosphate reductoisomerase (416 aa).

Residues T10, G11, S12, I13, G36, R37, N38, and N130 each coordinate NADPH. 1-deoxy-D-xylulose 5-phosphate is bound at residue K131. Residue E132 participates in NADPH binding. Mn(2+) is bound at residue D156. 4 residues coordinate 1-deoxy-D-xylulose 5-phosphate: S157, E158, S194, and H217. E158 serves as a coordination point for Mn(2+). G223 provides a ligand contact to NADPH. 1-deoxy-D-xylulose 5-phosphate-binding residues include S230, N235, K236, and E239. E239 contributes to the Mn(2+) binding site.

Belongs to the DXR family. It depends on Mg(2+) as a cofactor. The cofactor is Mn(2+).

It catalyses the reaction 2-C-methyl-D-erythritol 4-phosphate + NADP(+) = 1-deoxy-D-xylulose 5-phosphate + NADPH + H(+). It functions in the pathway isoprenoid biosynthesis; isopentenyl diphosphate biosynthesis via DXP pathway; isopentenyl diphosphate from 1-deoxy-D-xylulose 5-phosphate: step 1/6. Catalyzes the NADPH-dependent rearrangement and reduction of 1-deoxy-D-xylulose-5-phosphate (DXP) to 2-C-methyl-D-erythritol 4-phosphate (MEP). The polypeptide is 1-deoxy-D-xylulose 5-phosphate reductoisomerase (Synechococcus sp. (strain CC9311)).